Reading from the N-terminus, the 308-residue chain is Cytochrome b (308 aa).

A run of 4 helical transmembrane segments spans residues 1–21, 45–66, 81–101, and 146–166; these read FGLL…LLAA, WLIR…YLHI, WNIG…GYVX, and FFAL…VHLT. Heme b contacts are provided by histidine 51 and histidine 65. Residues histidine 150 and histidine 164 each coordinate heme b. Histidine 169 contributes to the a ubiquinone binding site. 3 helical membrane passes run 194–214, 256–276, and 288–308; these read TKDV…ALFS, LGGV…PFLH, and LSQI…WVSN.

This sequence belongs to the cytochrome b family. In terms of assembly, the cytochrome bc1 complex contains 11 subunits: 3 respiratory subunits (MT-CYB, CYC1 and UQCRFS1), 2 core proteins (UQCRC1 and UQCRC2) and 6 low-molecular weight proteins (UQCRH/QCR6, UQCRB/QCR7, UQCRQ/QCR8, UQCR10/QCR9, UQCR11/QCR10 and a cleavage product of UQCRFS1). This cytochrome bc1 complex then forms a dimer. It depends on heme b as a cofactor.

It is found in the mitochondrion inner membrane. Its function is as follows. Component of the ubiquinol-cytochrome c reductase complex (complex III or cytochrome b-c1 complex) that is part of the mitochondrial respiratory chain. The b-c1 complex mediates electron transfer from ubiquinol to cytochrome c. Contributes to the generation of a proton gradient across the mitochondrial membrane that is then used for ATP synthesis. The sequence is that of Cytochrome b (MT-CYB) from Pomatostomus ruficeps (Chestnut-crowned babbler).